A 223-amino-acid polypeptide reads, in one-letter code: Translation initiation factor 6 (223 aa).

This sequence belongs to the eIF-6 family. In terms of assembly, associates with the 50S ribosomal subunit, specifically with protein L14. Binds to 23S rRNA, possibly between where the 30S and 50S subunits associate to initiate translation. In terms of processing, modified in an unknown fashion (not phosphorylation) following release from 50S ribosomal subunits.

In terms of biological role, binds to the 50S ribosomal subunit and prevents its association with the 30S ribosomal subunit to form the 70S initiation complex. Inhibits translation of both leadered and leaderless mRNAs, maybe by binding to the 50S ribosome subunit, preventing it from binding to the 30S subunit. In Saccharolobus solfataricus (strain ATCC 35092 / DSM 1617 / JCM 11322 / P2) (Sulfolobus solfataricus), this protein is Translation initiation factor 6.